A 373-amino-acid polypeptide reads, in one-letter code: 4-hydroxy-3-methylbut-2-en-1-yl diphosphate synthase (flavodoxin) (373 aa).

[4Fe-4S] cluster contacts are provided by Cys270, Cys273, Cys305, and Glu312.

It belongs to the IspG family. Requires [4Fe-4S] cluster as cofactor.

It carries out the reaction (2E)-4-hydroxy-3-methylbut-2-enyl diphosphate + oxidized [flavodoxin] + H2O + 2 H(+) = 2-C-methyl-D-erythritol 2,4-cyclic diphosphate + reduced [flavodoxin]. Its pathway is isoprenoid biosynthesis; isopentenyl diphosphate biosynthesis via DXP pathway; isopentenyl diphosphate from 1-deoxy-D-xylulose 5-phosphate: step 5/6. Its function is as follows. Converts 2C-methyl-D-erythritol 2,4-cyclodiphosphate (ME-2,4cPP) into 1-hydroxy-2-methyl-2-(E)-butenyl 4-diphosphate. The chain is 4-hydroxy-3-methylbut-2-en-1-yl diphosphate synthase (flavodoxin) from Pectobacterium carotovorum subsp. carotovorum (strain PC1).